Reading from the N-terminus, the 411-residue chain is UPF0761 membrane protein PA14_51960 (411 aa).

Helical transmembrane passes span 36-56 (LFAV…IPAF), 92-112 (HLTW…LVTI), 132-152 (FLLY…GFAV), 174-194 (LLGL…YSAV), 207-229 (GGVF…VSLF), and 244-264 (IFLL…VLVC).

It belongs to the UPF0761 family.

It is found in the cell inner membrane. The sequence is that of UPF0761 membrane protein PA14_51960 from Pseudomonas aeruginosa (strain UCBPP-PA14).